The following is a 445-amino-acid chain: AVMGRNLALNIESRGYTVSIFNRSREKTEEVIAENPGKKLVPYYTVKEFVESLETPRRILLMVKAGAGTDAAIDSLKPYLDKGDIIIDGGNTFFQDTIRRNRELSAEGFNFIGTGVSGGEEGALKGPSIMPGGQKEAYELVAPILTKIAAVAEDGEPCVTYIGADGAGHYVKMVHNGIEYGDMQLIAEAYSLLKGGLNLSNEELAQTFTEWNNGELSSYLIDITKDIFTKKDEDGNYLVDVILDEAANKGTGKWTSQSALDLGEPLSLITESVFARYISSLKDQRVAASKVLSGPQAQSAGDKAEFIEKVRRALYLGKIVSYAQGFSQLRAASEEYNWDLNYGEIAKIFRAGCIIRAQFLQKITDAYAENPQIANLLLAPYFKQIADDYQQALRDVVAYAVQNGIPVPTFAAAVAYYDSYRAAVLPANLIQAQRDYFGAHTYKRI.

NADP(+) is bound by residues 1–4, 22–24, 63–65, and N91; these read AVMG, NRS, and VKA. Residues N91 and 117-119 contribute to the substrate site; that span reads SGG. The active-site Proton acceptor is the K172. 175–176 is a binding site for substrate; that stretch reads HN. The Proton donor role is filled by E179. 5 residues coordinate substrate: Y180, K249, R276, R434, and H440.

Belongs to the 6-phosphogluconate dehydrogenase family. In terms of assembly, homodimer.

The catalysed reaction is 6-phospho-D-gluconate + NADP(+) = D-ribulose 5-phosphate + CO2 + NADPH. It functions in the pathway carbohydrate degradation; pentose phosphate pathway; D-ribulose 5-phosphate from D-glucose 6-phosphate (oxidative stage): step 3/3. In terms of biological role, catalyzes the oxidative decarboxylation of 6-phosphogluconate to ribulose 5-phosphate and CO(2), with concomitant reduction of NADP to NADPH. This chain is 6-phosphogluconate dehydrogenase, decarboxylating (gnd), found in Shigella sonnei.